A 446-amino-acid chain; its full sequence is Maltoporin (446 aa).

Residues 1 to 25 (MMITLRKLPLAVAVAAGVMSAQAMA) form the signal peptide.

The protein belongs to the porin LamB (TC 1.B.3) family. As to quaternary structure, homotrimer formed of three 18-stranded antiparallel beta-barrels, containing three independent channels.

It is found in the cell outer membrane. The enzyme catalyses beta-maltose(in) = beta-maltose(out). Involved in the transport of maltose and maltodextrins. The protein is Maltoporin of Escherichia coli O157:H7 (strain EC4115 / EHEC).